The primary structure comprises 172 residues: MPLLDSFTVDHTRMHAPAVRVAKTMQTPKGDTITVFDLRFTAPNKDILSEKGIHTLEHLYAGFMRKHLNGASVEIIDISPMGCRTGFYMSLIGAPSEQDVASAWTASMEDVLKVESQNKIPELNEYQCGTAAMHSLDEAKQIAQNILAAGISVNKNDELALPEAMLKELKVD.

3 residues coordinate Fe cation: His-54, His-58, and Cys-128.

It belongs to the LuxS family. As to quaternary structure, homodimer. Requires Fe cation as cofactor.

The catalysed reaction is S-(5-deoxy-D-ribos-5-yl)-L-homocysteine = (S)-4,5-dihydroxypentane-2,3-dione + L-homocysteine. Functionally, involved in the synthesis of autoinducer 2 (AI-2) which is secreted by bacteria and is used to communicate both the cell density and the metabolic potential of the environment. The regulation of gene expression in response to changes in cell density is called quorum sensing. Catalyzes the transformation of S-ribosylhomocysteine (RHC) to homocysteine (HC) and 4,5-dihydroxy-2,3-pentadione (DPD). The polypeptide is S-ribosylhomocysteine lyase (Vibrio vulnificus (strain CMCP6)).